A 66-amino-acid polypeptide reads, in one-letter code: Large ribosomal subunit protein uL29 (66 aa).

This sequence belongs to the universal ribosomal protein uL29 family.

The chain is Large ribosomal subunit protein uL29 from Bacillus licheniformis (strain ATCC 14580 / DSM 13 / JCM 2505 / CCUG 7422 / NBRC 12200 / NCIMB 9375 / NCTC 10341 / NRRL NRS-1264 / Gibson 46).